Reading from the N-terminus, the 350-residue chain is Hydroxymethylglutaryl-CoA synthase (350 aa).

E83 serves as the catalytic Proton donor/acceptor. C115 (acyl-thioester intermediate) is an active-site residue. 2 residues coordinate (3S)-3-hydroxy-3-methylglutaryl-CoA: C115 and T156. Position 204 (R204) interacts with CoA. Residues T206 and H239 each contribute to the (3S)-3-hydroxy-3-methylglutaryl-CoA site. Catalysis depends on H239, which acts as the Proton donor/acceptor. Residue K244 coordinates CoA. Residues N271 and S301 each coordinate (3S)-3-hydroxy-3-methylglutaryl-CoA.

This sequence belongs to the thiolase-like superfamily. Archaeal HMG-CoA synthase family. In terms of assembly, interacts with acetoacetyl-CoA thiolase that catalyzes the precedent step in the pathway and with a DUF35 protein. The acetoacetyl-CoA thiolase/HMG-CoA synthase complex channels the intermediate via a fused CoA-binding site, which allows for efficient coupling of the endergonic thiolase reaction with the exergonic HMGCS reaction.

The catalysed reaction is acetoacetyl-CoA + acetyl-CoA + H2O = (3S)-3-hydroxy-3-methylglutaryl-CoA + CoA + H(+). It functions in the pathway metabolic intermediate biosynthesis; (R)-mevalonate biosynthesis; (R)-mevalonate from acetyl-CoA: step 2/3. Functionally, catalyzes the condensation of acetyl-CoA with acetoacetyl-CoA to form 3-hydroxy-3-methylglutaryl-CoA (HMG-CoA). Functions in the mevalonate (MVA) pathway leading to isopentenyl diphosphate (IPP), a key precursor for the biosynthesis of isoprenoid compounds that are building blocks of archaeal membrane lipids. The polypeptide is Hydroxymethylglutaryl-CoA synthase (Thermococcus kodakarensis (strain ATCC BAA-918 / JCM 12380 / KOD1) (Pyrococcus kodakaraensis (strain KOD1))).